Here is a 34-residue protein sequence, read N- to C-terminus: Photosystem II reaction center protein Psb30 (34 aa).

The chain crosses the membrane as a helical span at residues 5 to 25 (VLFQLTALIFVVAAGPLVIVL).

Belongs to the Psb30/Ycf12 family. As to quaternary structure, PSII is composed of 1 copy each of membrane proteins PsbA, PsbB, PsbC, PsbD, PsbE, PsbF, PsbH, PsbI, PsbJ, PsbK, PsbL, PsbM, PsbT, PsbX, PsbY, PsbZ, Psb30/Ycf12, peripheral proteins of the oxygen-evolving complex and a large number of cofactors. It forms dimeric complexes.

The protein resides in the plastid. It is found in the chloroplast thylakoid membrane. Its function is as follows. A core subunit of photosystem II (PSII), probably helps stabilize the reaction center. The protein is Photosystem II reaction center protein Psb30 of Tupiella akineta (Green alga).